A 182-amino-acid chain; its full sequence is Adenylate kinase (182 aa).

12 to 17 (GAGKGT) serves as a coordination point for ATP. An NMP region spans residues 32 to 61 (STGDLLREEVSGGTDLGKKAELIMNKGELV). Residues threonine 33, arginine 38, 59–61 (ELV), 85–88 (GFPR), and glutamine 92 contribute to the AMP site. The tract at residues 126 to 132 (GRGRKDD) is LID. Arginine 127 provides a ligand contact to ATP. AMP is bound by residues arginine 129 and arginine 140. Glycine 168 lines the ATP pocket.

The protein belongs to the adenylate kinase family. Monomer.

It is found in the cytoplasm. The enzyme catalyses AMP + ATP = 2 ADP. The protein operates within purine metabolism; AMP biosynthesis via salvage pathway; AMP from ADP: step 1/1. Its function is as follows. Catalyzes the reversible transfer of the terminal phosphate group between ATP and AMP. Plays an important role in cellular energy homeostasis and in adenine nucleotide metabolism. The sequence is that of Adenylate kinase from Prochlorococcus marinus (strain SARG / CCMP1375 / SS120).